A 550-amino-acid polypeptide reads, in one-letter code: (+)-germacrene D synthase (550 aa).

3 residues coordinate Mg(2+): aspartate 304, aspartate 308, and glutamate 455. The DDXXD motif signature appears at 304 to 308; the sequence is DDIYD.

The protein belongs to the terpene synthase family. Tpsa subfamily. Mg(2+) is required as a cofactor. Requires Mn(2+) as cofactor. It depends on Co(2+) as a cofactor. Ni(2+) serves as cofactor.

Its subcellular location is the cytoplasm. The catalysed reaction is (2E,6E)-farnesyl diphosphate = (+)-germacrene D + diphosphate. The protein operates within secondary metabolite biosynthesis; terpenoid biosynthesis. In terms of biological role, involved in the biosynthesis of germacrene D. Can use farnesyl diphosphate as substrate, but not geranyl diphosphate. Produces mainly (+)-germacrene D along with germacrene B and a number of minor by-products. The sequence is that of (+)-germacrene D synthase from Zingiber officinale (Ginger).